Here is a 399-residue protein sequence, read N- to C-terminus: Elongation factor Tu (399 aa).

In terms of domain architecture, tr-type G spans 10 to 209; sequence KPHVNIGTIG…AVDDYIPTPV (200 aa). The interval 19-26 is G1; sequence GHVDHGKT. Residue 19–26 participates in GTP binding; the sequence is GHVDHGKT. T26 is a Mg(2+) binding site. The interval 62–66 is G2; that stretch reads GITIN. Residues 83 to 86 form a G3 region; it reads DCPG. Residues 83–87 and 138–141 contribute to the GTP site; these read DCPGH and NKCD. The tract at residues 138–141 is G4; sequence NKCD. Residues 175-177 form a G5 region; sequence SAY.

This sequence belongs to the TRAFAC class translation factor GTPase superfamily. Classic translation factor GTPase family. EF-Tu/EF-1A subfamily. Monomer.

Its subcellular location is the cytoplasm. It carries out the reaction GTP + H2O = GDP + phosphate + H(+). In terms of biological role, GTP hydrolase that promotes the GTP-dependent binding of aminoacyl-tRNA to the A-site of ribosomes during protein biosynthesis. This is Elongation factor Tu from Bifidobacterium longum (strain DJO10A).